We begin with the raw amino-acid sequence, 234 residues long: Phosphoribosylaminoimidazole-succinocarboxamide synthase (234 aa).

The protein belongs to the SAICAR synthetase family.

The enzyme catalyses 5-amino-1-(5-phospho-D-ribosyl)imidazole-4-carboxylate + L-aspartate + ATP = (2S)-2-[5-amino-1-(5-phospho-beta-D-ribosyl)imidazole-4-carboxamido]succinate + ADP + phosphate + 2 H(+). It participates in purine metabolism; IMP biosynthesis via de novo pathway; 5-amino-1-(5-phospho-D-ribosyl)imidazole-4-carboxamide from 5-amino-1-(5-phospho-D-ribosyl)imidazole-4-carboxylate: step 1/2. This is Phosphoribosylaminoimidazole-succinocarboxamide synthase from Staphylococcus aureus (strain COL).